A 152-amino-acid polypeptide reads, in one-letter code: UPF0260 protein BAB1_1496 (152 aa).

This sequence belongs to the UPF0260 family.

In Brucella abortus (strain 2308), this protein is UPF0260 protein BAB1_1496.